The primary structure comprises 168 residues: MEVTNGLNLKDTELRLGLPGAQEEQQLELSCVRSNNKRKNNDSTEESAPPPAKTQIVGWPPVRSNRKNNNNKNVSYVKVSMDGAPYLRKIDLKMYKNYPELLKALENMFKFTVGEYSEREGYKGSGFVPTYEDKDGDWMLVGDVPWDMFSSSCQKLRIMKGSEAPTAL.

Positions 1 to 74 (MEVTNGLNLK…NRKNNNNKNV (74 aa)) are disordered. The EAR-like (transcriptional repression) motif lies at 14–18 (LRLGL). Over residues 23–34 (EEQQLELSCVRS) the composition is skewed to polar residues. The 88-residue stretch at 74 to 161 (VSYVKVSMDG…SCQKLRIMKG (88 aa)) folds into the PB1 domain.

This sequence belongs to the Aux/IAA family. In terms of assembly, homodimers and heterodimers. Interacts with the auxin-responsive protein IAA2. Interacts with TPL. Post-translationally, phosphorylated by phytochrome A in vitro. Preferentially expressed in stems, leaves and flowers.

The protein localises to the nucleus. Functionally, aux/IAA proteins are short-lived transcriptional factors that function as repressors of early auxin response genes at low auxin concentrations. Repression is thought to result from the interaction with auxin response factors (ARFs), proteins that bind to the auxin-responsive promoter element (AuxRE). Formation of heterodimers with ARF proteins may alter their ability to modulate early auxin response genes expression. This is Auxin-responsive protein IAA1 (IAA1) from Arabidopsis thaliana (Mouse-ear cress).